We begin with the raw amino-acid sequence, 156 residues long: MSRKKRYFKTVILNDPKFGSYIIAKFINYIMNNGKKNLAQKIFYYSISIISIRLNKNPFILIKKILYNVQPNFEIKKKKIGGSFYKIPIKINLKRSLMFSMKWIVKNSKLRNENGYKNKLVGELIDSYYNNSLSTKQKDELNKIIDQNKAYSNFKI.

Belongs to the universal ribosomal protein uS7 family. Part of the 30S ribosomal subunit. Contacts proteins S9 and S11.

Functionally, one of the primary rRNA binding proteins, it binds directly to 16S rRNA where it nucleates assembly of the head domain of the 30S subunit. Is located at the subunit interface close to the decoding center, probably blocks exit of the E-site tRNA. The sequence is that of Small ribosomal subunit protein uS7 from Carsonella ruddii (strain PV).